Reading from the N-terminus, the 503-residue chain is SusD-like protein P38 (503 aa).

The N-terminal stretch at 1–21 (MKKFKNISITFLILISLGVLN) is a signal peptide.

It belongs to the SusD family.

Its subcellular location is the cell outer membrane. Its function is as follows. Polysaccharide-binding protein probably involved in ulvan degradation. Ulvan is the main polysaccharide component of the Ulvales (green seaweed) cell wall. It is composed of disaccharide building blocks comprising 3-sulfated rhamnose (Rha3S) linked to D-glucuronic acid (GlcA), L-iduronic acid (IduA), or D-xylose (Xyl). The SusD-like protein may mediate ulvan oligomer-binding before transport in the periplasm for further degradation. In Formosa agariphila (strain DSM 15362 / KCTC 12365 / LMG 23005 / KMM 3901 / M-2Alg 35-1), this protein is SusD-like protein P38.